The following is a 352-amino-acid chain: Photosystem II D2 protein (352 aa).

Thr-2 bears the N-acetylthreonine mark. Thr-2 is modified (phosphothreonine). A helical membrane pass occupies residues 40–60 (CAYMALGGWLTGTTFVTSWYT). His-117 is a chlorophyll a binding site. A helical membrane pass occupies residues 124–140 (GFMLRQFEIAQSLKLRP). Residues Gln-129 and Asn-142 each contribute to the pheophytin a site. The helical transmembrane segment at 152 to 165 (VFVSVFLIYPLGQA) threads the bilayer. A chlorophyll a-binding site is contributed by His-197. A helical transmembrane segment spans residues 207–227 (AALLCAIHGATVENTLFEDGD). Positions 214 and 261 each coordinate a plastoquinone. Fe cation is bound at residue His-214. Residue His-268 coordinates Fe cation. The helical transmembrane segment at 278–294 (GLWMSAIGVVGLALNLR) threads the bilayer.

The protein belongs to the reaction center PufL/M/PsbA/D family. As to quaternary structure, PSII is composed of 1 copy each of membrane proteins PsbA, PsbB, PsbC, PsbD, PsbE, PsbF, PsbH, PsbI, PsbJ, PsbK, PsbL, PsbM, PsbT, PsbX, PsbY, PsbZ, Psb30/Ycf12, at least 3 peripheral proteins of the oxygen-evolving complex and a large number of cofactors. It forms dimeric complexes. The D1/D2 heterodimer binds P680, chlorophylls that are the primary electron donor of PSII, and subsequent electron acceptors. It shares a non-heme iron and each subunit binds pheophytin, quinone, additional chlorophylls, carotenoids and lipids. There is also a Cl(-1) ion associated with D1 and D2, which is required for oxygen evolution. The PSII complex binds additional chlorophylls, carotenoids and specific lipids. is required as a cofactor.

It localises to the plastid. The protein resides in the chloroplast thylakoid membrane. It catalyses the reaction 2 a plastoquinone + 4 hnu + 2 H2O = 2 a plastoquinol + O2. Photosystem II (PSII) is a light-driven water:plastoquinone oxidoreductase that uses light energy to abstract electrons from H(2)O, generating O(2) and a proton gradient subsequently used for ATP formation. It consists of a core antenna complex that captures photons, and an electron transfer chain that converts photonic excitation into a charge separation. The D1/D2 (PsbA/PsbD) reaction center heterodimer binds P680, the primary electron donor of PSII as well as several subsequent electron acceptors. D2 is needed for assembly of a stable PSII complex. In Stigeoclonium helveticum (Green alga), this protein is Photosystem II D2 protein.